We begin with the raw amino-acid sequence, 1293 residues long: DNA repair protein complementing XP-C cells homolog (1293 aa).

Disordered regions lie at residues M1–K199, E217–T239, Q255–G341, D514–L640, and L658–K919. The span at D18–E30 shows a compositional bias: basic and acidic residues. Phosphoserine is present on residues S31, S32, and S37. Residues S31 to Q43 are compositionally biased toward acidic residues. A compositionally biased stretch (low complexity) spans S51 to G60. Composition is skewed to polar residues over residues F101–R130 and R226–A238. The segment covering S288–T301 has biased composition (basic residues). Positions D313 to E335 are enriched in acidic residues. Basic and acidic residues predominate over residues L520–P578. Residues S533 and S537 each carry the phosphoserine modification. The span at S580–T594 shows a compositional bias: low complexity. Basic and acidic residues predominate over residues V598 to S612. A compositionally biased stretch (low complexity) spans L658–K692. Basic and acidic residues predominate over residues S693–V711. Residues K720–S737 are compositionally biased toward polar residues. Positions H806 to S818 are enriched in basic and acidic residues. Phosphoserine is present on residues S908 and S911. 3 consecutive short sequence motifs (nuclear localization signal) follow at residues K922 to R938, K1195 to K1211, and K1275 to Y1291.

The protein belongs to the XPC family. In terms of assembly, heterodimer.

The protein localises to the nucleus. Its function is as follows. Involved in DNA excision repair. May play a part in DNA damage recognition and/or in altering chromatin structure to allow access by damage-processing enzymes. Functionally, involved in nucleotide excision repair of DNA damaged with UV light, bulky adducts, or cross-linking agents. The protein is DNA repair protein complementing XP-C cells homolog of Drosophila melanogaster (Fruit fly).